The following is a 102-amino-acid chain: Putative pterin-4-alpha-carbinolamine dehydratase (102 aa).

This sequence belongs to the pterin-4-alpha-carbinolamine dehydratase family.

It carries out the reaction (4aS,6R)-4a-hydroxy-L-erythro-5,6,7,8-tetrahydrobiopterin = (6R)-L-erythro-6,7-dihydrobiopterin + H2O. The chain is Putative pterin-4-alpha-carbinolamine dehydratase from Burkholderia lata (strain ATCC 17760 / DSM 23089 / LMG 22485 / NCIMB 9086 / R18194 / 383).